The sequence spans 417 residues: UDP-N-acetylglucosamine 1-carboxyvinyltransferase (417 aa).

22–23 is a phosphoenolpyruvate binding site; it reads KN. R93 is a UDP-N-acetyl-alpha-D-glucosamine binding site. The active-site Proton donor is C117. C117 is modified (2-(S-cysteinyl)pyruvic acid O-phosphothioketal). UDP-N-acetyl-alpha-D-glucosamine is bound by residues 122 to 126, D304, and I326; that span reads RPVDQ.

The protein belongs to the EPSP synthase family. MurA subfamily.

It localises to the cytoplasm. It carries out the reaction phosphoenolpyruvate + UDP-N-acetyl-alpha-D-glucosamine = UDP-N-acetyl-3-O-(1-carboxyvinyl)-alpha-D-glucosamine + phosphate. Its pathway is cell wall biogenesis; peptidoglycan biosynthesis. In terms of biological role, cell wall formation. Adds enolpyruvyl to UDP-N-acetylglucosamine. This is UDP-N-acetylglucosamine 1-carboxyvinyltransferase from Neisseria meningitidis serogroup A / serotype 4A (strain DSM 15465 / Z2491).